The following is a 125-amino-acid chain: Small ribosomal subunit protein uS13 (125 aa).

It belongs to the universal ribosomal protein uS13 family. In terms of assembly, part of the 30S ribosomal subunit. Forms a loose heterodimer with protein S19. Forms two bridges to the 50S subunit in the 70S ribosome.

Functionally, located at the top of the head of the 30S subunit, it contacts several helices of the 16S rRNA. In the 70S ribosome it contacts the 23S rRNA (bridge B1a) and protein L5 of the 50S subunit (bridge B1b), connecting the 2 subunits; these bridges are implicated in subunit movement. Contacts the tRNAs in the A and P-sites. The chain is Small ribosomal subunit protein uS13 from Rickettsia prowazekii (strain Madrid E).